The following is a 466-amino-acid chain: MSLSLWQHCLARLQDELPATEFSMWIRPLQAELSDNTLALYAPNRFVLDWVREKYINNINALLVDFCGSDVPSLRFEVGNKPVSARTTESVPKTVTHPAVNSTPTNSQPVRPSWDNQPQSQLPELNYRSNVNPKHKFDNFVEGKSNQLARAAARQVADNPGGAYNPLFLYGGTGLGKTHLLHAVGNSIMERKANAKVVYMHSERFVQDMVKALQNNAIEDFKRYYRSVDALLIDDIQFFANKERSQEEFFHTFNALLEGNQQIILTSDRYPKEINGVEDRLKSRFGWGLTVAIEPPELETRVAILMKKADENQIQLPDEVAFFIAKRLRSNVRELEGALNRVIANANFTGRAITIDFVREALRDLLALQEKLVTIDNIQKTVAEYYKIKVADLLSKRRSRSVARPRQMAMALAKELTNHSLPEIGDAFGGRDHTTVLHACRKIEQLREESHDIKEDFSNLIRTLSS.

The segment at 1–85 (MSLSLWQHCL…FEVGNKPVSA (85 aa)) is domain I, interacts with DnaA modulators. The disordered stretch occupies residues 82–122 (PVSARTTESVPKTVTHPAVNSTPTNSQPVRPSWDNQPQSQL). Positions 85–122 (ARTTESVPKTVTHPAVNSTPTNSQPVRPSWDNQPQSQL) are enriched in polar residues. A domain II region spans residues 85 to 129 (ARTTESVPKTVTHPAVNSTPTNSQPVRPSWDNQPQSQLPELNYRS). The domain III, AAA+ region stretch occupies residues 130-346 (NVNPKHKFDN…GALNRVIANA (217 aa)). G174, G176, K177, and T178 together coordinate ATP. A domain IV, binds dsDNA region spans residues 347-466 (NFTGRAITID…FSNLIRTLSS (120 aa)).

It belongs to the DnaA family. Oligomerizes as a right-handed, spiral filament on DNA at oriC.

The protein localises to the cytoplasm. Plays an essential role in the initiation and regulation of chromosomal replication. ATP-DnaA binds to the origin of replication (oriC) to initiate formation of the DNA replication initiation complex once per cell cycle. Binds the DnaA box (a 9 base pair repeat at the origin) and separates the double-stranded (ds)DNA. Forms a right-handed helical filament on oriC DNA; dsDNA binds to the exterior of the filament while single-stranded (ss)DNA is stabiized in the filament's interior. The ATP-DnaA-oriC complex binds and stabilizes one strand of the AT-rich DNA unwinding element (DUE), permitting loading of DNA polymerase. After initiation quickly degrades to an ADP-DnaA complex that is not apt for DNA replication. Binds acidic phospholipids. The sequence is that of Chromosomal replication initiator protein DnaA from Proteus mirabilis (strain HI4320).